Consider the following 113-residue polypeptide: Putative pterin-4-alpha-carbinolamine dehydratase (113 aa).

This sequence belongs to the pterin-4-alpha-carbinolamine dehydratase family.

It catalyses the reaction (4aS,6R)-4a-hydroxy-L-erythro-5,6,7,8-tetrahydrobiopterin = (6R)-L-erythro-6,7-dihydrobiopterin + H2O. The protein is Putative pterin-4-alpha-carbinolamine dehydratase of Bordetella bronchiseptica (strain ATCC BAA-588 / NCTC 13252 / RB50) (Alcaligenes bronchisepticus).